A 297-amino-acid polypeptide reads, in one-letter code: uncharacterized protein (297 aa).

The region spanning 187–285 (EKLIATLHAS…GYAPSAVLKN (99 aa)) is the HTH araC/xylS-type domain. DNA-binding regions (H-T-H motif) lie at residues 204-225 (ADMA…LRYT) and 252-275 (VGEV…KHKF).

This is an uncharacterized protein from Escherichia coli (strain K12).